A 317-amino-acid polypeptide reads, in one-letter code: Methionyl-tRNA formyltransferase (317 aa).

Residue 110 to 113 coordinates (6S)-5,6,7,8-tetrahydrofolate; it reads SLLP.

Belongs to the Fmt family.

It carries out the reaction L-methionyl-tRNA(fMet) + (6R)-10-formyltetrahydrofolate = N-formyl-L-methionyl-tRNA(fMet) + (6S)-5,6,7,8-tetrahydrofolate + H(+). In terms of biological role, attaches a formyl group to the free amino group of methionyl-tRNA(fMet). The formyl group appears to play a dual role in the initiator identity of N-formylmethionyl-tRNA by promoting its recognition by IF2 and preventing the misappropriation of this tRNA by the elongation apparatus. The sequence is that of Methionyl-tRNA formyltransferase from Bacillus subtilis (strain 168).